A 553-amino-acid polypeptide reads, in one-letter code: MYRVKSESDCEMIHQEQMDSPVADDGSSGGSPHRGGGPPLKKGPWTSAEDAILVDYVKKHGEGNWNAVQKNTGLFRCGKSCRLRWANHLRPNLKKGAFTAEEERLIIQLHSKMGNKWARMAAHLPGRTDNEIKNYWNTRIKRCQRAGLPIYPTSVCNQSSNEDQQCSSDFDCGENLSNDLLNANGLYLPDFTCDNFIANSEALPYAPHLSAVSISNLLGQSFASKSCSFMDQVNQTGMLKQSDGVLPGLSDTINGVISSVDQFSNDSEKLKQAVGFDYLHEANSTSKIIAPFGGALNGSHAFLNGNFSASRPTSGPLKMELPSLQDTESDPNSWLKYTVAPALQPTELVDPYLQSPAATPSVKSECASPRNSGLLEELVHEAQTLRSGKNQQTSVISSSSSVGTPCNTTVLSPEFDMCQEYWEEQHPGPFLNDCAPFSGNSFTESTPPVSAASPDIFQLSKVSPAQSTSMGSGEQVMGPKYEPGDTSPHPENFRPDALFSGNTADPSVFNNAIAMLLGNDLSIDCRPVLGDGIMFNSSSWSNMPHACEMSEFK.

Positions 1–17 (MYRVKSESDCEMIHQEQ) are enriched in basic and acidic residues. The tract at residues 1–45 (MYRVKSESDCEMIHQEQMDSPVADDGSSGGSPHRGGGPPLKKGPW) is disordered. Residues 27–38 (SSGGSPHRGGGP) show a composition bias toward gly residues. 2 HTH myb-type domains span residues 37-89 (GPPL…ANHL) and 90-144 (RPNL…KRCQ). 2 consecutive DNA-binding regions (H-T-H motif) follow at residues 65 to 89 (WNAV…ANHL) and 117 to 140 (WARM…NTRI). The interval 464 to 488 (PAQSTSMGSGEQVMGPKYEPGDTSP) is disordered.

Its subcellular location is the nucleus. Transcriptional activator of gibberellin-dependent alpha-amylase expression in aleurone cells. Involved in pollen and floral organs development. May bind to the 5'-TAACAAA-3' box of alpha-amylase promoter. The chain is Transcription factor GAMYB (GAM1) from Oryza sativa subsp. indica (Rice).